The primary structure comprises 134 residues: ATP synthase epsilon chain (134 aa).

This sequence belongs to the ATPase epsilon chain family. F-type ATPases have 2 components, CF(1) - the catalytic core - and CF(0) - the membrane proton channel. CF(1) has five subunits: alpha(3), beta(3), gamma(1), delta(1), epsilon(1). CF(0) has three main subunits: a, b and c.

It localises to the cell membrane. In terms of biological role, produces ATP from ADP in the presence of a proton gradient across the membrane. The sequence is that of ATP synthase epsilon chain from Alkaliphilus metalliredigens (strain QYMF).